A 168-amino-acid polypeptide reads, in one-letter code: Thiol peroxidase (168 aa).

In terms of domain architecture, Thioredoxin spans 20-168; the sequence is PAVGSQLPAF…DYDKALAALA (149 aa). Cys-62 acts as the Cysteine sulfenic acid (-SOH) intermediate in catalysis. Cysteines 62 and 96 form a disulfide.

The protein belongs to the peroxiredoxin family. Tpx subfamily. Homodimer.

It catalyses the reaction a hydroperoxide + [thioredoxin]-dithiol = an alcohol + [thioredoxin]-disulfide + H2O. In terms of biological role, thiol-specific peroxidase that catalyzes the reduction of hydrogen peroxide and organic hydroperoxides to water and alcohols, respectively. Plays a role in cell protection against oxidative stress by detoxifying peroxides. This chain is Thiol peroxidase, found in Chlorobaculum tepidum (strain ATCC 49652 / DSM 12025 / NBRC 103806 / TLS) (Chlorobium tepidum).